Reading from the N-terminus, the 706-residue chain is Phosphatase and actin regulator 4 (706 aa).

One copy of the RPEL 1 repeat lies at 42–67 (EVLERKISMRKPREELVKRGLLVEVP). 4 disordered regions span residues 65-123 (EVPE…QPCA), 196-380 (VHPR…HIPV), 385-404 (VPML…QSAS), and 459-579 (LKVP…REEW). Residues 106–121 (DSTGSRPKSGETTVQP) show a composition bias toward polar residues. The span at 200-211 (HLSEKNSEKYRP) shows a compositional bias: basic and acidic residues. Residues 266-276 (DPSTRQQSSVP) are compositionally biased toward polar residues. Residues 290–299 (KQPPVPPPKP) show a composition bias toward pro residues. Acidic residues-rich tracts occupy residues 463 to 476 (DDDD…DESL), 508 to 523 (QEEE…DTDS), and 531 to 541 (EDDEEEEEEET). A compositionally biased stretch (basic and acidic residues) spans 563-579 (GPHDSNPEFPQRSREEW). RPEL repeat units lie at residues 588–613 (SQLN…QKNE) and 625–650 (RRLT…RFNE).

The protein belongs to the phosphatase and actin regulator family. As to quaternary structure, binds ppp1ca and actin.

It is found in the cytoplasm. The protein localises to the cell projection. It localises to the lamellipodium. In terms of biological role, regulator of protein phosphatase 1 (PP1) required for neural tube and optic fissure closure, and enteric neural crest cell (ENCCs) migration during development. Acts as an activator of PP1. During neural tube closure, localizes to the ventral neural tube and activates PP1, leading to down-regulate cell proliferation within cranial neural tissue and the neural retina. Also acts as a regulator of migration of enteric neural crest cells (ENCCs) by activating PP1, leading to repression of the integrin signaling through the rho/rock pathway. The protein is Phosphatase and actin regulator 4 (phactr4) of Xenopus tropicalis (Western clawed frog).